The sequence spans 582 residues: Aspartate--tRNA ligase (582 aa).

E174 provides a ligand contact to L-aspartate. The aspartate stretch occupies residues 198–201; sequence QITK. R220 is a binding site for L-aspartate. Residues 220–222 and Q229 contribute to the ATP site; that span reads RDE. H443 contacts L-aspartate. E477 lines the ATP pocket. R484 is a binding site for L-aspartate. Residue 529–532 coordinates ATP; it reads GLDR.

Belongs to the class-II aminoacyl-tRNA synthetase family. Type 1 subfamily. Homodimer.

It is found in the cytoplasm. The enzyme catalyses tRNA(Asp) + L-aspartate + ATP = L-aspartyl-tRNA(Asp) + AMP + diphosphate. In terms of biological role, catalyzes the attachment of L-aspartate to tRNA(Asp) in a two-step reaction: L-aspartate is first activated by ATP to form Asp-AMP and then transferred to the acceptor end of tRNA(Asp). The chain is Aspartate--tRNA ligase from Streptococcus equi subsp. zooepidemicus (strain MGCS10565).